A 481-amino-acid chain; its full sequence is G-protein coupled receptor 37-like 1 (481 aa).

Residues 1–24 (MRWLWPLAVSLAVVLAVGPSEVSG) form the signal peptide. The Extracellular segment spans residues 25-134 (AATLSLGGHR…ESSYSAYAVM (110 aa)). 2 disordered regions span residues 30-55 (LGGH…GPKE) and 76-107 (LQPT…TNLT). A compositionally biased stretch (polar residues) spans 95 to 107 (TSESGQELRTNLT). N-linked (GlcNAc...) asparagine glycosylation is present at asparagine 105. The helical transmembrane segment at 135-155 (LLALVVFAVGIVGNLSVMCIV) threads the bilayer. Topologically, residues 156–167 (WHSYYLKSAWNS) are cytoplasmic. The chain crosses the membrane as a helical span at residues 168 to 188 (ILASLALWDFLVLFFCLPIVI). Residues 189–205 (FNEITKQRLLGDVSCRA) lie on the Extracellular side of the membrane. A disulfide bridge links cysteine 203 with cysteine 286. Residues 206-226 (VPFMEVSSLGVTTFSLCALGI) traverse the membrane as a helical segment. At 227-251 (DRFHVATSTLPKVRPIERCQSILAK) the chain is on the cytoplasmic side. A helical membrane pass occupies residues 252 to 272 (LAVIWVGSMMLAVPELLLWQL). At 273–310 (AQEPTPTMGTVDSCIMKPSADLPESLYSLVMTYQNARM) the chain is on the extracellular side. A helical transmembrane segment spans residues 311–331 (WWYFGCYFCLPILFTVTCQLV). Over 332-360 (TWRVRGPPGRKPECRAGRHEQCESQLNST) the chain is Cytoplasmic. The helical transmembrane segment at 361–381 (VVGLTVVYAFCTLPENICNIV) threads the bilayer. Residues 382–398 (VAYLSTELTRQTLDLLG) are Extracellular-facing. Residues 399–419 (LINQFSTFFKGAITPVLLLCI) form a helical membrane-spanning segment. Residues 420–481 (CRPLGQAFLD…PPLLPLGTPC (62 aa)) lie on the Cytoplasmic side of the membrane. The residue at position 471 (serine 471) is a Phosphoserine. At threonine 479 the chain carries Phosphothreonine.

The protein belongs to the G-protein coupled receptor 1 family. As to quaternary structure, interacts with the PTCH1 receptor. Post-translationally, undergoes metalloprotease-mediated cleavage which reduces its constitutive activity. In terms of processing, ubiquitinated. Highly expressed in brain.

The protein resides in the cell membrane. The protein localises to the cell projection. It is found in the cilium membrane. Its function is as follows. G-protein coupled receptor. Has been shown to bind the neuroprotective and glioprotective factor prosaposin (PSAP), leading to endocytosis followed by an ERK phosphorylation cascade. However, other studies have shown that prosaposin does not increase activity. It has been suggested that GPR37L1 is a constitutively active receptor which signals through the guanine nucleotide-binding protein G(s) subunit alpha. Participates in the regulation of postnatal cerebellar development by modulating the Shh pathway. Regulates baseline blood pressure in females and protects against cardiovascular stress in males. Mediates inhibition of astrocyte glutamate transporters and reduction in neuronal N-methyl-D-aspartate receptor activity. This chain is G-protein coupled receptor 37-like 1 (Gpr37l1), found in Rattus norvegicus (Rat).